Here is a 445-residue protein sequence, read N- to C-terminus: Argininosuccinate synthase (445 aa).

Residues 17–25 and alanine 43 contribute to the ATP site; that span reads AFSGGLDTS. Residue tyrosine 99 coordinates L-citrulline. 2 residues coordinate ATP: glycine 129 and threonine 131. Residues threonine 131, asparagine 135, and aspartate 136 each contribute to the L-aspartate site. Asparagine 135 is a binding site for L-citrulline. Residue aspartate 136 coordinates ATP. Residues arginine 139 and serine 192 each coordinate L-citrulline. Aspartate 194 provides a ligand contact to ATP. The L-citrulline site is built by threonine 201, glutamate 203, and glutamate 280.

Belongs to the argininosuccinate synthase family. Type 2 subfamily. Homotetramer.

It localises to the cytoplasm. The enzyme catalyses L-citrulline + L-aspartate + ATP = 2-(N(omega)-L-arginino)succinate + AMP + diphosphate + H(+). The protein operates within amino-acid biosynthesis; L-arginine biosynthesis; L-arginine from L-ornithine and carbamoyl phosphate: step 2/3. The chain is Argininosuccinate synthase from Burkholderia ambifaria (strain MC40-6).